The chain runs to 478 residues: Elongation factor Tu, chloroplastic (478 aa).

Positions 1 to 29 (MASISAATATSSTKLVSSNSTNPLLPSST) are enriched in low complexity. The interval 1–31 (MASISAATATSSTKLVSSNSTNPLLPSSTKP) is disordered. The transit peptide at 1 to 69 (MASISAATAT…THRHRRFTVR (69 aa)) directs the protein to the chloroplast. In terms of domain architecture, tr-type G spans 79 to 283 (KPHVNIGTIG…AVDSYIPIPV (205 aa)). Positions 88–95 (GHVDHGKT) are G1. 88–95 (GHVDHGKT) is a GTP binding site. Positions 129-133 (GITIN) are G2. A G3 region spans residues 150–153 (DCPG). Residues 150-154 (DCPGH) and 205-208 (NKQD) contribute to the GTP site. The interval 205–208 (NKQD) is G4. The interval 243 to 245 (SAL) is G5.

The protein belongs to the TRAFAC class translation factor GTPase superfamily. Classic translation factor GTPase family. EF-Tu/EF-1A subfamily.

The protein localises to the plastid. It localises to the chloroplast. Its function is as follows. This protein promotes the GTP-dependent binding of aminoacyl-tRNA to the A-site of ribosomes during protein biosynthesis. The chain is Elongation factor Tu, chloroplastic (TUFA) from Nicotiana tabacum (Common tobacco).